Consider the following 310-residue polypeptide: Fructose-bisphosphate aldolase/6-deoxy-5-ketofructose 1-phosphate synthase (310 aa).

Residues 48-49 (DQ), H53, D57, and W180 each bind substrate. Y182 acts as the Proton donor in catalysis. Substrate is bound by residues R184, 213–215 (KVN), 241–243 (AGG), and 270–271 (GR). The active-site Schiff-base intermediate with dihydroxyacetone-P is the K213. K213 (schiff-base intermediate with substrate) is an active-site residue.

Belongs to the DeoC/FbaB aldolase family.

It carries out the reaction beta-D-fructose 1,6-bisphosphate = D-glyceraldehyde 3-phosphate + dihydroxyacetone phosphate. The catalysed reaction is beta-D-fructose 1,6-bisphosphate + methylglyoxal = 1-deoxy-D-threo-hexo-2,5-diulose 6-phosphate + D-glyceraldehyde 3-phosphate. The enzyme catalyses beta-D-fructose 1-phosphate + methylglyoxal = 1-deoxy-D-threo-hexo-2,5-diulose 6-phosphate + D-glyceraldehyde. The protein operates within aromatic compound metabolism. Functionally, catalyzes the transaldolization of either fructose-1-P or fructose-1,6-bisphosphate with methylglyoxal to produce 6-deoxy-5-ketofructose-1-phosphate (DKFP). Also catalyzes the reversible aldol condensation of dihydroxyacetone phosphate (DHAP or glycerone-phosphate) with glyceraldehyde 3-phosphate (G3P or GAP) to produce fructose 1,6-bisphosphate (FBP). In Methanocaldococcus jannaschii (strain ATCC 43067 / DSM 2661 / JAL-1 / JCM 10045 / NBRC 100440) (Methanococcus jannaschii), this protein is Fructose-bisphosphate aldolase/6-deoxy-5-ketofructose 1-phosphate synthase.